A 281-amino-acid chain; its full sequence is Ribosomal protein L11 methyltransferase (281 aa).

S-adenosyl-L-methionine is bound by residues threonine 131, glycine 152, aspartate 174, and asparagine 217.

It belongs to the methyltransferase superfamily. PrmA family.

It is found in the cytoplasm. The catalysed reaction is L-lysyl-[protein] + 3 S-adenosyl-L-methionine = N(6),N(6),N(6)-trimethyl-L-lysyl-[protein] + 3 S-adenosyl-L-homocysteine + 3 H(+). In terms of biological role, methylates ribosomal protein L11. The polypeptide is Ribosomal protein L11 methyltransferase (Phocaeicola vulgatus (strain ATCC 8482 / DSM 1447 / JCM 5826 / CCUG 4940 / NBRC 14291 / NCTC 11154) (Bacteroides vulgatus)).